The sequence spans 445 residues: Protein phosphatase 2C 53 (445 aa).

The region spanning 124–435 (LWGLESICGR…DNITVVVIDL (312 aa)) is the PPM-type phosphatase domain. The Mn(2+) site is built by D180, G181, D362, and D426.

It belongs to the PP2C family. As to quaternary structure, interacts with PYL10, SAPK8 and SAPK10. Binding to PYL10 is dependent on the presence of abscisic acid (ABA). Interacts with PYL3, PYL5, PYL9 and PYL10. Binding to PYL9 and PYL10 is dependent on the presence of ABA. Mg(2+) is required as a cofactor. Requires Mn(2+) as cofactor. As to expression, expressed in leaf blades, leaf sheaths and lamina joints. Expressed at low levels in roots, stems, flowers and panicles.

It localises to the cytoplasm. The protein resides in the cytosol. The protein localises to the nucleus. It catalyses the reaction O-phospho-L-seryl-[protein] + H2O = L-seryl-[protein] + phosphate. It carries out the reaction O-phospho-L-threonyl-[protein] + H2O = L-threonyl-[protein] + phosphate. With respect to regulation, repressed by abscisic acid-bound PYL1. In terms of biological role, protein phosphatase that acts as a negative regulator of abscisic acid (ABA) signaling. Involved in the regulation of root architecture development and drought resistance. Can dephosphorylate SAPK8 and SAPK10 in vitro. Together with PYL10, SAPK8 and SAPK10, may form an ABA signaling module involved in stress response. The polypeptide is Protein phosphatase 2C 53 (Oryza sativa subsp. japonica (Rice)).